The primary structure comprises 147 residues: UPF0251 protein CTC_01373 (147 aa).

Belongs to the UPF0251 family.

This chain is UPF0251 protein CTC_01373, found in Clostridium tetani (strain Massachusetts / E88).